Reading from the N-terminus, the 169-residue chain is E1B protein, small T-antigen (169 aa).

The interval 147 to 169 (GSVVEEEQGEEHLARDSDDPFFD) is disordered. Over residues 156–169 (EEHLARDSDDPFFD) the composition is skewed to basic and acidic residues.

The protein belongs to the adenoviridae E1B 19 kDa protein family.

This chain is E1B protein, small T-antigen, found in Canine adenovirus serotype 1 (strain Glaxo) (CAdV-1).